We begin with the raw amino-acid sequence, 198 residues long: GDP-mannose pyrophosphatase (198 aa).

Residues 38–40 (KRE), R67, and 85–87 (AGL) contribute to the GDP-alpha-D-mannose site. The 138-residue stretch at 43–180 (DRGNGATVLL…EIRDGKAVIL (138 aa)) folds into the Nudix hydrolase domain. 3 residues coordinate Mg(2+): A85, E100, and E104. The Nudix box motif lies at 86–106 (GLLDNDEPEACIRKEAVEETG). Residues E104, E127, 150–151 (DE), and K176 contribute to the GDP-alpha-D-mannose site. E151 lines the Mg(2+) pocket.

The protein belongs to the Nudix hydrolase family. NudK subfamily. Homodimer. It depends on Mg(2+) as a cofactor.

It catalyses the reaction GDP-alpha-D-mannose + H2O = alpha-D-mannose 1-phosphate + GMP + 2 H(+). Nucleoside diphosphate sugar hydrolase that hydrolyzes GDP-mannose as its preferred substrate, yielding GMP and mannose-1-phosphate. The chain is GDP-mannose pyrophosphatase (nudK) from Klebsiella pneumoniae subsp. pneumoniae (strain ATCC 700721 / MGH 78578).